The primary structure comprises 321 residues: Small ribosomal subunit protein mS43 (321 aa).

The transit peptide at 1–13 (MLRFTGARAIRKY) directs the protein to the mitochondrion.

Belongs to the mitochondrion-specific ribosomal protein mS43 family. As to quaternary structure, component of the mitochondrial small ribosomal subunit (mt-SSU). Mature yeast 74S mitochondrial ribosomes consist of a small (37S) and a large (54S) subunit. The 37S small subunit contains a 15S ribosomal RNA (15S mt-rRNA) and 34 different proteins. The 54S large subunit contains a 21S rRNA (21S mt-rRNA) and 46 different proteins. mS43 forms a heterodimer with mS42, building a large protuberance adjacent to the mRNA channel exit in the mt-SSU body.

The protein resides in the mitochondrion. In terms of biological role, component of the mitochondrial ribosome (mitoribosome), a dedicated translation machinery responsible for the synthesis of mitochondrial genome-encoded proteins, including at least some of the essential transmembrane subunits of the mitochondrial respiratory chain. The mitoribosomes are attached to the mitochondrial inner membrane and translation products are cotranslationally integrated into the membrane. This Saccharomyces cerevisiae (strain ATCC 204508 / S288c) (Baker's yeast) protein is Small ribosomal subunit protein mS43 (MRP1).